A 456-amino-acid chain; its full sequence is ATP synthase subunit beta 1 (456 aa).

Position 152–159 (152–159) interacts with ATP; the sequence is GGAGVGKS.

It belongs to the ATPase alpha/beta chains family. As to quaternary structure, F-type ATPases have 2 components, CF(1) - the catalytic core - and CF(0) - the membrane proton channel. CF(1) has five subunits: alpha(3), beta(3), gamma(1), delta(1), epsilon(1). CF(0) has three main subunits: a(1), b(2) and c(9-12). The alpha and beta chains form an alternating ring which encloses part of the gamma chain. CF(1) is attached to CF(0) by a central stalk formed by the gamma and epsilon chains, while a peripheral stalk is formed by the delta and b chains.

The protein localises to the cell membrane. The enzyme catalyses ATP + H2O + 4 H(+)(in) = ADP + phosphate + 5 H(+)(out). Functionally, produces ATP from ADP in the presence of a proton gradient across the membrane. The catalytic sites are hosted primarily by the beta subunits. The chain is ATP synthase subunit beta 1 from Listeria monocytogenes serovar 1/2a (strain ATCC BAA-679 / EGD-e).